Consider the following 389-residue polypeptide: Phospho-N-acetylmuramoyl-pentapeptide-transferase (389 aa).

10 helical membrane passes run 25–45, 73–93, 97–117, 135–155, 190–210, 222–242, 258–278, 286–306, 311–331, and 366–386; these read RAVMATITALVIGLVCGPWVI, TMGGVLILIGIAVATLLWGDL, FIWIVMLVTFGFGVIGWVDDY, FWQSVIGLFAAVYLAFSVSEA, ISYPLGVWGFIALTYFVIVGA, GLVIMPVVLVGASLGVFAYVM, GAGELLIFCSAMGGAGLAFLW, VFMGDVGALALGGALGTVAVI, IVLFIMGGIFVAETLSVMLQV, and QVVVRFWIITLMLCLFGLSTL.

The protein belongs to the glycosyltransferase 4 family. MraY subfamily. Mg(2+) serves as cofactor.

It localises to the cell inner membrane. The enzyme catalyses UDP-N-acetyl-alpha-D-muramoyl-L-alanyl-gamma-D-glutamyl-meso-2,6-diaminopimeloyl-D-alanyl-D-alanine + di-trans,octa-cis-undecaprenyl phosphate = di-trans,octa-cis-undecaprenyl diphospho-N-acetyl-alpha-D-muramoyl-L-alanyl-D-glutamyl-meso-2,6-diaminopimeloyl-D-alanyl-D-alanine + UMP. It functions in the pathway cell wall biogenesis; peptidoglycan biosynthesis. Its function is as follows. Catalyzes the initial step of the lipid cycle reactions in the biosynthesis of the cell wall peptidoglycan: transfers peptidoglycan precursor phospho-MurNAc-pentapeptide from UDP-MurNAc-pentapeptide onto the lipid carrier undecaprenyl phosphate, yielding undecaprenyl-pyrophosphoryl-MurNAc-pentapeptide, known as lipid I. The polypeptide is Phospho-N-acetylmuramoyl-pentapeptide-transferase (Burkholderia mallei (strain NCTC 10247)).